The following is a 438-amino-acid chain: Trigger factor (438 aa).

One can recognise a PPIase FKBP-type domain in the interval Gly163–Ala248.

It belongs to the FKBP-type PPIase family. Tig subfamily.

Its subcellular location is the cytoplasm. The catalysed reaction is [protein]-peptidylproline (omega=180) = [protein]-peptidylproline (omega=0). Functionally, involved in protein export. Acts as a chaperone by maintaining the newly synthesized protein in an open conformation. Functions as a peptidyl-prolyl cis-trans isomerase. The sequence is that of Trigger factor from Desulforudis audaxviator (strain MP104C).